Reading from the N-terminus, the 277-residue chain is Alpha-ketoglutarate-dependent dioxygenase tstK (277 aa).

The protein belongs to the asaB hydroxylase/desaturase family.

It catalyses the reaction 2-[(1R,8S,14R,15R)-11-hydroxy-14,15-bis[(6E)-oct-6-en-1-yl]-3,5,9-trioxo-4,10-dioxatetracyclo[9.4.0.0(2,6).0(8,12)]pentadeca-2(6),12-dien-8-yl]acetate + 3 2-oxoglutarate + 3 O2 = phomoidride A + 3 succinate + 3 CO2 + H2O. Its function is as follows. Alpha-ketoglutarate-dependent dioxygenase; part of the gene cluster that mediates the biosynthesis of the antihypercholesterolemic agents phomoidrides which are dimeric anhydrides. Within the pathway, tstK is responsible for the iterative oxidation necessary to convert prephomoidride to phomoidride A. The pathway begins with the highly reducing polyketide synthase tstiA that catalyzes the formation of a C12-fatty acyl-ACP, starting from one acetate and 5 malonate units. The hydrolase tstM is involved in the release of the C12-fatty acyl chain from phiA. The alkylcitrate synthase (ACS) tstJ and the alkylcitrate dehydratase (ACDH) tstI then give rise to decarboxylated monomeric anhydrides by coupling the C12-fatty acyl chain with oxalacetic acid. The cyclase tstC is responsible for the dimerization of the monomeric anhydrides which leads to the production of prephomoidride that contains the characteristic bicyclo[4.3.1]deca-1,6-diene system of phomoidrides. Iterative oxidation catalyzed by the alpha-ketoglutarate-dependent dioxygenase tstK produced then phomoidride A. Finally, the methyltransferase tstE converts phomoidride A to phomoidride B via an acetalization reaction. The phosphatidylethanolamine-binding protein tstB and tstN are not essential for dimerization and their functions have still to be determined. The protein is Alpha-ketoglutarate-dependent dioxygenase tstK of Talaromyces stipitatus (strain ATCC 10500 / CBS 375.48 / QM 6759 / NRRL 1006) (Penicillium stipitatum).